The following is a 228-amino-acid chain: Ribose-5-phosphate isomerase A (228 aa).

Substrate-binding positions include 32-35, 85-88, and 98-101; these read TGST, DGAD, and KGGG. The active-site Proton acceptor is E107. K125 is a binding site for substrate.

It belongs to the ribose 5-phosphate isomerase family. In terms of assembly, homodimer.

It catalyses the reaction aldehydo-D-ribose 5-phosphate = D-ribulose 5-phosphate. It participates in carbohydrate degradation; pentose phosphate pathway; D-ribose 5-phosphate from D-ribulose 5-phosphate (non-oxidative stage): step 1/1. Catalyzes the reversible conversion of ribose-5-phosphate to ribulose 5-phosphate. This chain is Ribose-5-phosphate isomerase A, found in Ralstonia nicotianae (strain ATCC BAA-1114 / GMI1000) (Ralstonia solanacearum).